Reading from the N-terminus, the 29-residue chain is Cyclotide vibi-B (29 aa).

The segment at residues 1–29 is a cross-link (cyclopeptide (Gly-Asn)); it reads GLPVCGETCFGGTCNTPGCTCSYPICTRN. Intrachain disulfides connect cysteine 5/cysteine 19, cysteine 9/cysteine 21, and cysteine 14/cysteine 26.

In terms of processing, this is a cyclic peptide.

Its function is as follows. Probably participates in a plant defense mechanism. The polypeptide is Cyclotide vibi-B (Viola biflora (Yellow wood violet)).